A 229-amino-acid chain; its full sequence is ATP synthase subunit a (229 aa).

6 helical membrane-spanning segments follow: residues 25–45 (ADAV…SIAA), 82–102 (FFPL…IGLI), 104–124 (GFFP…VVFV), 142–162 (FLGP…IGHL), 181–201 (LVLI…MMLM), and 202–222 (GVLV…IYIQ).

It belongs to the ATPase A chain family. In terms of assembly, F-type ATPases have 2 components, CF(1) - the catalytic core - and CF(0) - the membrane proton channel. CF(1) has five subunits: alpha(3), beta(3), gamma(1), delta(1), epsilon(1). CF(0) has three main subunits: a(1), b(2) and c(9-12). The alpha and beta chains form an alternating ring which encloses part of the gamma chain. CF(1) is attached to CF(0) by a central stalk formed by the gamma and epsilon chains, while a peripheral stalk is formed by the delta and b chains.

Its subcellular location is the cell inner membrane. Key component of the proton channel; it plays a direct role in the translocation of protons across the membrane. The polypeptide is ATP synthase subunit a (Geobacter sp. (strain M21)).